Consider the following 281-residue polypeptide: MAVNVYSTSVTSENLSRHDMLAWVNDSLHLNYTKIEQLCSGAAYCQFMDMLFPGCVHLRKVKFQAKLEHEYIHNFKVLQAAFKKMGVDKIIPVEKLVKGKFQDNFEFIQWFKKFFDANYDGKDYNPLLARQGQDVAPPPNPGDQIFNKSKKLIGTAVPQRTSPTGPKNMQTSGRLSNVAPPCILRKNPPSARNGGHETDAQILELNQQLVDLKLTVDGLEKERDFYFSKLRDIELICQEHESENSPVISGIIGILYATEEGFAPPEDDEIEEHQQEDQDEY.

Residues 14–116 form the Calponin-homology (CH) domain; that stretch reads NLSRHDMLAW…FIQWFKKFFD (103 aa). The interval 157 to 181 is disordered; that stretch reads VPQRTSPTGPKNMQTSGRLSNVAPP. Residues 158 to 175 show a composition bias toward polar residues; the sequence is PQRTSPTGPKNMQTSGRL. Phosphoserine is present on residues S162 and S176. The 71-residue stretch at 194–264 folds into the EB1 C-terminal domain; sequence GGHETDAQIL…LYATEEGFAP (71 aa). The tract at residues 217 to 260 is APC-binding; the sequence is DGLEKERDFYFSKLRDIELICQEHESENSPVISGIIGILYATEE. Residues 217–281 are DCTN1-binding; sequence DGLEKERDFY…EHQQEDQDEY (65 aa). The interval 261-281 is disordered; it reads GFAPPEDDEIEEHQQEDQDEY. Over residues 272 to 281 the composition is skewed to basic and acidic residues; sequence EHQQEDQDEY.

This sequence belongs to the MAPRE family. Homodimer. Heterodimer with MAPRE1. Binds monomeric and polymerized GTP-bound tubulin. Interacts with APC2. Interacts with DCTN1 and SRCIN1. Binds to the C-terminal domain of APC. Interacts (via C-terminus) with CLIP1. Interacts with SLAIN2 and SLAIN1. Interacts with AKAP9. Interacts with PDE4DIP. Interacts with PDE4DIP isoform 13/MMG8/SMYLE; this interaction is required for its recruitment to the Golgi apparatus. Predominantly expressed in brain and muscle.

The protein localises to the cytoplasm. The protein resides in the cytoskeleton. Functionally, plus-end tracking protein (+TIP) that binds to the plus-end of microtubules and regulates the dynamics of the microtubule cytoskeleton. Promotes microtubule growth. May be involved in spindle function by stabilizing microtubules and anchoring them at centrosomes. Also acts as a regulator of minus-end microtubule organization: interacts with the complex formed by AKAP9 and PDE4DIP, leading to recruit CAMSAP2 to the Golgi apparatus, thereby tethering non-centrosomal minus-end microtubules to the Golgi, an important step for polarized cell movement. Promotes elongation of CAMSAP2-decorated microtubule stretches on the minus-end of microtubules. The polypeptide is Microtubule-associated protein RP/EB family member 3 (MAPRE3) (Homo sapiens (Human)).